Here is a 109-residue protein sequence, read N- to C-terminus: Class I hydrophobin 7 (109 aa).

An N-terminal signal peptide occupies residues 1-17 (MFAQSFIITALAALAVA). 4 cysteine pairs are disulfide-bonded: Cys-28-Cys-88, Cys-35-Cys-82, Cys-36-Cys-69, and Cys-89-Cys-102.

It belongs to the fungal hydrophobin family. As to quaternary structure, self-assembles to form functional amyloid fibrils called rodlets. Self-assembly into fibrillar rodlets occurs spontaneously at hydrophobic:hydrophilic interfaces and the rodlets further associate laterally to form amphipathic monolayers.

The protein localises to the secreted. It is found in the cell wall. Functionally, aerial growth, conidiation, and dispersal of filamentous fungi in the environment rely upon a capability of their secreting small amphipathic proteins called hydrophobins (HPBs) with low sequence identity. Class I can self-assemble into an outermost layer of rodlet bundles on aerial cell surfaces, conferring cellular hydrophobicity that supports fungal growth, development and dispersal; whereas Class II form highly ordered films at water-air interfaces through intermolecular interactions but contribute nothing to the rodlet structure. Hydph7 is a class I hydrophobin involved in fruiting body development. The sequence is that of Class I hydrophobin 7 from Pleurotus ostreatus (strain PC15) (Oyster mushroom).